The chain runs to 243 residues: MSGHSKWHNIQGRKNAQDAKRGKVFQKLSREIYMAAKSGGPDPSGNPTLRMVMDKARAANMPKTNIERAIKKAEGNSDEHYDEITYEGYAPGGVAVLVEALTDNKNRTASDVRVAFTRNGGSLGATGSVAYMFDRKGYLVIDRSTTDADEDQVLLDVMDAGGDDLETSDDAFEIYTDPKQFTAVRDALEKAGYKLANAELTMIPQNTTPVPADKKEQFAHLIDALEDNDDVSNVYTAAADDDE.

A disordered region spans residues methionine 1–glycine 22.

It belongs to the TACO1 family.

It localises to the cytoplasm. The polypeptide is Probable transcriptional regulatory protein LJ_0904 (Lactobacillus johnsonii (strain CNCM I-12250 / La1 / NCC 533)).